A 218-amino-acid chain; its full sequence is 7-cyano-7-deazaguanine synthase (218 aa).

Residue 10–20 (FSGGQDSTTCL) participates in ATP binding. Zn(2+)-binding residues include cysteine 186, cysteine 195, cysteine 198, and cysteine 201.

It belongs to the QueC family. As to quaternary structure, homodimer. The cofactor is Zn(2+).

It catalyses the reaction 7-carboxy-7-deazaguanine + NH4(+) + ATP = 7-cyano-7-deazaguanine + ADP + phosphate + H2O + H(+). It participates in purine metabolism; 7-cyano-7-deazaguanine biosynthesis. Functionally, catalyzes the ATP-dependent conversion of 7-carboxy-7-deazaguanine (CDG) to 7-cyano-7-deazaguanine (preQ(0)). In Exiguobacterium sibiricum (strain DSM 17290 / CCUG 55495 / CIP 109462 / JCM 13490 / 255-15), this protein is 7-cyano-7-deazaguanine synthase.